Here is a 54-residue protein sequence, read N- to C-terminus: Large ribosomal subunit protein eL37 (54 aa).

Zn(2+)-binding residues include C20, C23, C35, and C38. A C4-type zinc finger spans residues C20–C38.

It belongs to the eukaryotic ribosomal protein eL37 family. Zn(2+) serves as cofactor.

Binds to the 23S rRNA. The chain is Large ribosomal subunit protein eL37 (rpl37e) from Thermoplasma volcanium (strain ATCC 51530 / DSM 4299 / JCM 9571 / NBRC 15438 / GSS1).